The primary structure comprises 207 residues: Probable HTH-type transcriptional regulator YttP (207 aa).

One can recognise an HTH tetR-type domain in the interval 3 to 63 (VSTKDKIIES…HLVSEFYEGY (61 aa)). Positions 26–45 (SVREIAKSADVNVAHISYYF) form a DNA-binding region, H-T-H motif.

The protein is Probable HTH-type transcriptional regulator YttP (yttP) of Bacillus subtilis (strain 168).